We begin with the raw amino-acid sequence, 70 residues long: Cytochrome c oxidase subunit 8B, mitochondrial (70 aa).

The N-terminal 24 residues, 1–24, are a transit peptide targeting the mitochondrion; the sequence is MPRLPPALRLLQPPLRCWVVPKLH. Residues 25–35 lie on the Mitochondrial matrix side of the membrane; sequence VSAKPARTPTS. The chain crosses the membrane as a helical span at residues 36-59; that stretch reads PAEQAVGLSMMFLSFLVPAGWVLS. Residues 60–70 are Mitochondrial intermembrane-facing; that stretch reads HLESYKKSSTA.

Belongs to the cytochrome c oxidase VIII family. As to quaternary structure, component of the cytochrome c oxidase (complex IV, CIV), a multisubunit enzyme composed of 14 subunits. The complex is composed of a catalytic core of 3 subunits MT-CO1, MT-CO2 and MT-CO3, encoded in the mitochondrial DNA, and 11 supernumerary subunits COX4I, COX5A, COX5B, COX6A, COX6B, COX6C, COX7A, COX7B, COX7C, COX8 and NDUFA4, which are encoded in the nuclear genome. The complex exists as a monomer or a dimer and forms supercomplexes (SCs) in the inner mitochondrial membrane with NADH-ubiquinone oxidoreductase (complex I, CI) and ubiquinol-cytochrome c oxidoreductase (cytochrome b-c1 complex, complex III, CIII), resulting in different assemblies (supercomplex SCI(1)III(2)IV(1) and megacomplex MCI(2)III(2)IV(2)).

It is found in the mitochondrion inner membrane. It participates in energy metabolism; oxidative phosphorylation. Functionally, component of the cytochrome c oxidase, the last enzyme in the mitochondrial electron transport chain which drives oxidative phosphorylation. The respiratory chain contains 3 multisubunit complexes succinate dehydrogenase (complex II, CII), ubiquinol-cytochrome c oxidoreductase (cytochrome b-c1 complex, complex III, CIII) and cytochrome c oxidase (complex IV, CIV), that cooperate to transfer electrons derived from NADH and succinate to molecular oxygen, creating an electrochemical gradient over the inner membrane that drives transmembrane transport and the ATP synthase. Cytochrome c oxidase is the component of the respiratory chain that catalyzes the reduction of oxygen to water. Electrons originating from reduced cytochrome c in the intermembrane space (IMS) are transferred via the dinuclear copper A center (CU(A)) of subunit 2 and heme A of subunit 1 to the active site in subunit 1, a binuclear center (BNC) formed by heme A3 and copper B (CU(B)). The BNC reduces molecular oxygen to 2 water molecules using 4 electrons from cytochrome c in the IMS and 4 protons from the mitochondrial matrix. The chain is Cytochrome c oxidase subunit 8B, mitochondrial (COX8B) from Eulemur fulvus fulvus (Brown lemur).